Consider the following 213-residue polypeptide: Probable transaldolase (213 aa).

Lys83 acts as the Schiff-base intermediate with substrate in catalysis.

It belongs to the transaldolase family. Type 3B subfamily.

The protein resides in the cytoplasm. It carries out the reaction D-sedoheptulose 7-phosphate + D-glyceraldehyde 3-phosphate = D-erythrose 4-phosphate + beta-D-fructose 6-phosphate. The protein operates within carbohydrate degradation; pentose phosphate pathway; D-glyceraldehyde 3-phosphate and beta-D-fructose 6-phosphate from D-ribose 5-phosphate and D-xylulose 5-phosphate (non-oxidative stage): step 2/3. Functionally, transaldolase is important for the balance of metabolites in the pentose-phosphate pathway. This is Probable transaldolase from Syntrophomonas wolfei subsp. wolfei (strain DSM 2245B / Goettingen).